Reading from the N-terminus, the 936-residue chain is Isoleucine--tRNA ligase (936 aa).

Positions 58–68 match the 'HIGH' region motif; the sequence is PYANGRAHLGT. E561 contacts L-isoleucyl-5'-AMP. The short motif at 602 to 606 is the 'KMSKS' region element; it reads KMSKS. K605 contacts ATP. 4 residues coordinate Zn(2+): C899, C902, C919, and C922.

This sequence belongs to the class-I aminoacyl-tRNA synthetase family. IleS type 1 subfamily. In terms of assembly, monomer. Zn(2+) is required as a cofactor.

Its subcellular location is the cytoplasm. The enzyme catalyses tRNA(Ile) + L-isoleucine + ATP = L-isoleucyl-tRNA(Ile) + AMP + diphosphate. Catalyzes the attachment of isoleucine to tRNA(Ile). As IleRS can inadvertently accommodate and process structurally similar amino acids such as valine, to avoid such errors it has two additional distinct tRNA(Ile)-dependent editing activities. One activity is designated as 'pretransfer' editing and involves the hydrolysis of activated Val-AMP. The other activity is designated 'posttransfer' editing and involves deacylation of mischarged Val-tRNA(Ile). The sequence is that of Isoleucine--tRNA ligase from Coxiella burnetii (strain CbuK_Q154) (Coxiella burnetii (strain Q154)).